Consider the following 602-residue polypeptide: Aryl hydrocarbon receptor protein 1 (602 aa).

The propeptide occupies 1–2; the sequence is MY. Residues 1 to 12 show a composition bias toward basic residues; it reads MYASKRRQRNFK. Residues 1-28 are disordered; sequence MYASKRRQRNFKRVRDPPKQLTNTNPSK. Short sequence motifs (nuclear localization signal) lie at residues 5–8 and 28–33; these read KRRQ and KRHRER. Positions 18-71 constitute a bHLH domain; the sequence is PKQLTNTNPSKRHRERLNGELETVAMLLPYDSSTISRLDKLSVLRLAVSFLQCK. Required for maintaining the overall integrity of the AHR:ARNT heterodimer and its transcriptional activity regions lie at residues 41–73, 133–141, and 266–268; these read VAMLLPYDSSTISRLDKLSVLRLAVSFLQCKAH, SLKSLGGFI, and ICV. A Nuclear export signal motif is present at residues 55–63; it reads LDKLSVLRL. In terms of domain architecture, PAS spans 126–196; sequence ESNFEEISLK…QQLDSNFHIP (71 aa). The tract at residues 440-467 is disordered; that stretch reads STSNSLFPSVPVPTPTTTKANRRRKENS.

As to quaternary structure, interacts with daf-21/hsp90. Interacts with aha-1. In terms of tissue distribution, expressed in many distinct neuronal cells including RMED, RMEV, RMEL and RMER. Functions in URX neurons to promote aggregation behavior.

The protein localises to the nucleus. In terms of biological role, probable ligand-activated transcriptional activator. Acts as a transcriptional regulator in GABAergic motor neuron cell fate specification and development. Promotes cell-type-specific expression of guanylate cyclase genes that have key roles in aggregation behavior and hyperoxia avoidance. Has no role in carbon dioxide avoidance. This Caenorhabditis elegans protein is Aryl hydrocarbon receptor protein 1.